We begin with the raw amino-acid sequence, 331 residues long: MAKWGQGDPRWIVEEREDGTNVNNWHWTERDATIWSKGKLRELLVGIAMENEAGRCEISELKQVEGEASCNSRKGKLIFFYEWNIKLAWKGTVKESGAKHKGLIEIPSLSEENEINDTEVNVSKKKGDGEILKDLMRTTGTAKVREALGEYLKALKTEFTTGMILPTKAVATQELTLQRKLNENKLQASPVALGVRIPTVALHLTELFDTTVEQLYSIFTVKELVQKFSKSPAVLEAERGGKFQMFDGNISGEYVELVTNRKIIMKWRCRNWPEEHYATVELNFVPAPGQTELQLDCKGVPVCKEENMKFCWQKQHFEEIKGLLELTAQNA.

The protein belongs to the AHA1 family.

Functionally, co-chaperone that stimulates HSP90 ATPase activity. This chain is Activator of 90 kDa heat shock protein ATPase homolog 2 (Ahsa2), found in Mus musculus (Mouse).